Here is a 175-residue protein sequence, read N- to C-terminus: Peptide deformylase (175 aa).

Residues C98 and H140 each coordinate Fe cation. E141 is a catalytic residue. H144 is a binding site for Fe cation.

Belongs to the polypeptide deformylase family. Requires Fe(2+) as cofactor.

The enzyme catalyses N-terminal N-formyl-L-methionyl-[peptide] + H2O = N-terminal L-methionyl-[peptide] + formate. In terms of biological role, removes the formyl group from the N-terminal Met of newly synthesized proteins. Requires at least a dipeptide for an efficient rate of reaction. N-terminal L-methionine is a prerequisite for activity but the enzyme has broad specificity at other positions. The protein is Peptide deformylase of Bradyrhizobium sp. (strain ORS 278).